Consider the following 279-residue polypeptide: RRP15-like protein (279 aa).

Disordered stretches follow at residues 1 to 40 (MALL…GANA), 56 to 120 (GPTV…TERR), and 200 to 279 (KSTA…DEED). Basic and acidic residues predominate over residues 73 to 83 (KTSEAAKKPGF). Acidic residues-rich tracts occupy residues 93–104 (KEEDDDDEEDGD) and 213–224 (QETDDDDEDDTA). The segment covering 232 to 245 (KKSEWNVLREDFMT) has biased composition (basic and acidic residues). A compositionally biased stretch (acidic residues) spans 267–279 (DEADDSDDDDEED).

This sequence belongs to the RRP15 family.

This chain is RRP15-like protein, found in Drosophila pseudoobscura pseudoobscura (Fruit fly).